Reading from the N-terminus, the 860-residue chain is MQEQYRPEDIETQVQLHWQEKQTFKVTEDTSKEKYYCLSMLPYPSGRLHMGHVRNYTIGDVISRYQRMLGKNVLQPIGWDAFGLPAEGAAVKNNTAPAPWTYDNIEYMKNQLKLLGFGYDWDREIATCSPDYYRWEQWFFTKLYEKGMVYKKTSAVNWCPHDLTVLANEQVIDGCCWRCDTKVERKEIPQWFIKITDYADQLLNDLDTLESWPEQVKTMQRNWIGRSEGVDIVFNVADSEEKLSVYTTRPDTFMGVTYVAVAAGHPLSLQAAATNPALADFVAECRNTKVAEAEMATMEKKGMATGLYAIHPLTGEKLPIWAANFVLMDYGTGAVMAVPGHDARDWEFATKYNLPIKPVILAADGSEPDLSQEAMTEKGILFNSGEFDGLNYEDGFNAVADKLVALGVGQRKVNYRLRDWGVSRQRYWGAPIPMVTLEDGTVVPTPEDQLPVILPEDVVMDGITSPIKADPEWAKTTVNGVPGLRETDTFDTFMESSWYYARYTCPQFDKGMLDPAAANYWLPVDQYVGGIEHAIMHLMYFRFFHKLLRDAGLVDSDEPAKRLLCQGMVLADAFYYSGSNGERIWVSPVDAIVERDDKGRIIKATDAEGHELVYAGMSKMSKSKNNGIDPQVMVEKYGADTVRLFMMFASPAEMTLEWQESGVEGANRFLKRVWRLAYDHTAKGATAPLDVANLTEEQKSLRRDLHKTIAKVTDDVGRRQTFNTAIAAVMELMNKLGRAPQETEQDRALLQEALLAVVRMLYPFTPHVCFSLWQALGGEGDIDTAPWPVADEQAMVEDSKLVVVQVNGKVRGRITVPADATEQQVRERAGQEHLVAKYLDGVTVRKVIYVPGKLLNLVVG.

Residues 42 to 52 (PYPSGRLHMGH) carry the 'HIGH' region motif. A 'KMSKS' region motif is present at residues 619–623 (KMSKS). Lys-622 is a binding site for ATP.

It belongs to the class-I aminoacyl-tRNA synthetase family.

It is found in the cytoplasm. It carries out the reaction tRNA(Leu) + L-leucine + ATP = L-leucyl-tRNA(Leu) + AMP + diphosphate. The chain is Leucine--tRNA ligase from Yersinia enterocolitica serotype O:8 / biotype 1B (strain NCTC 13174 / 8081).